A 72-amino-acid polypeptide reads, in one-letter code: Defensin-like protein 35 (72 aa).

An N-terminal signal peptide occupies residues 1–22 (MASNKISFSFVLCLYMCSLLDA). 3 disulfides stabilise this stretch: Cys32-Cys58, Cys44-Cys67, and Cys48-Cys69.

This sequence belongs to the DEFL family.

It localises to the secreted. The sequence is that of Defensin-like protein 35 from Arabidopsis thaliana (Mouse-ear cress).